A 171-amino-acid polypeptide reads, in one-letter code: uncharacterized protein (171 aa).

This is an uncharacterized protein from Orgyia pseudotsugata multicapsid polyhedrosis virus (OpMNPV).